The chain runs to 481 residues: Probable Xaa-Pro aminopeptidase PEPP (481 aa).

Residues Asp-265, Asp-276, Glu-399, and Glu-439 each contribute to the Mn(2+) site.

The protein belongs to the peptidase M24B family. The cofactor is Mn(2+).

The catalysed reaction is Release of any N-terminal amino acid, including proline, that is linked to proline, even from a dipeptide or tripeptide.. Catalyzes the removal of a penultimate prolyl residue from the N-termini of peptides. The polypeptide is Probable Xaa-Pro aminopeptidase PEPP (PEPP) (Uncinocarpus reesii (strain UAMH 1704)).